A 195-amino-acid polypeptide reads, in one-letter code: Imidazoleglycerol-phosphate dehydratase (195 aa).

The protein belongs to the imidazoleglycerol-phosphate dehydratase family.

It is found in the cytoplasm. The enzyme catalyses D-erythro-1-(imidazol-4-yl)glycerol 3-phosphate = 3-(imidazol-4-yl)-2-oxopropyl phosphate + H2O. The protein operates within amino-acid biosynthesis; L-histidine biosynthesis; L-histidine from 5-phospho-alpha-D-ribose 1-diphosphate: step 6/9. The polypeptide is Imidazoleglycerol-phosphate dehydratase (Paraburkholderia phytofirmans (strain DSM 17436 / LMG 22146 / PsJN) (Burkholderia phytofirmans)).